Here is a 325-residue protein sequence, read N- to C-terminus: Glutaminase (325 aa).

Substrate is bound by residues Ser76, Asn125, Glu169, Asn176, Tyr200, Tyr252, and Val270.

It belongs to the glutaminase family. Homotetramer.

It catalyses the reaction L-glutamine + H2O = L-glutamate + NH4(+). The polypeptide is Glutaminase (Clavibacter michiganensis subsp. michiganensis (strain NCPPB 382)).